The following is an 886-amino-acid chain: MEAALLVCQYTIQSLIQLTRDDPGFFNVEILEFPFYPACNVCTADVNATINFDVGGKKHKLNLDFGLLTPHTKAVYQPRGAFGGSENATNLFLLELLGAGELALTMRSKKLPINITTGEEQQVSLESVDVYFQDVFGTMWCHHAEMQNPVYLIPETVPYIKWDNCNSTNITAVVRAQGLDVTLPLSLPTSAQDSNFSVKTEMLGNEIDIECIMEDGEISQVLPGDNKFNITCSGYESHVPSGGILTSTSPVATPIPGTGYAYSLRLTPRPVSRFLGNNSILYVFYSGNGPKASGGDYCIQSNIVFSDEIPASQDMPTNTTDITYVGDNATYSVPMVTSEDANSPNVTVTAFWAWPNNTETDFKCKWTLTSGTPSGCENISGAFASNRTFDITVSGLGTAPKTLIITRTATNATTTTHKVIFSKAPESTTTSPTLNTTGFAAPNTTTGLPSSTHVPTNLTAPASTGPTVSTADVTSPTPAGTTSGASPVTPSPSPRDNGTESKAPDMTSPTSAVTTPTPNATSPTPAVTTPTPNATSPTLGKTSPTSAVTTPTPNATSPTPAVTTPTPNATIPTLGKTSPTSAVTTPTPNATSPTVGETSPQANTTNHTLGGTSSTPVVTSPPKNATSAVTTGQHNITSSSTSSMSLRPSSISETLSPSTSDNSTSHMPLLTSAHPTGGENITQVTPASTSTHHVSTSSPAPRPGTTSQASGPGNSSTSTKPGEVNVTKGTPPKNATSPQAPSGQKTAVPTVTSTGGKANSTTGGKHTTGHGARTSTEPTTDYGGDSTTPRTRYNATTYLPPSTSSKLRPRWTFTSPPVTTAQATVPVPPTSQPRFSNLSMLVLQWASLAVLTLLLLLVMADCAFRRNLSTSHTYTTPPYDDAETYV.

Residues 1-839 (MEAALLVCQY…TSQPRFSNLS (839 aa)) are Virion surface-facing. N-linked (GlcNAc...) asparagine; by host glycosylation is found at asparagine 47, asparagine 87, asparagine 114, asparagine 166, asparagine 169, asparagine 195, asparagine 229, asparagine 277, asparagine 318, asparagine 328, asparagine 345, asparagine 356, asparagine 378, asparagine 386, asparagine 411, asparagine 435, asparagine 443, asparagine 457, asparagine 497, asparagine 519, asparagine 533, asparagine 554, asparagine 568, asparagine 589, asparagine 603, asparagine 606, asparagine 624, and asparagine 635. The tract at residues 423–810 (KAPESTTTSP…PSTSSKLRPR (388 aa)) is disordered. The span at 428–437 (TTTSPTLNTT) shows a compositional bias: low complexity. A compositionally biased stretch (polar residues) spans 442 to 488 (PNTTTGLPSSTHVPTNLTAPASTGPTVSTADVTSPTPAGTTSGASPV). A compositionally biased stretch (low complexity) spans 507–595 (TSPTSAVTTP…PTPNATSPTV (89 aa)). Positions 596–637 (GETSPQANTTNHTLGGTSSTPVVTSPPKNATSAVTTGQHNIT) are enriched in polar residues. Residues 638-660 (SSSTSSMSLRPSSISETLSPSTS) show a composition bias toward low complexity. N-linked (GlcNAc...) asparagine; by host glycosylation is found at asparagine 662 and asparagine 680. Over residues 684-699 (VTPASTSTHHVSTSSP) the composition is skewed to low complexity. A compositionally biased stretch (polar residues) spans 704–720 (GTTSQASGPGNSSTSTK). Residues asparagine 714, asparagine 725, asparagine 734, and asparagine 759 are each glycosylated (N-linked (GlcNAc...) asparagine; by host). A compositionally biased stretch (polar residues) spans 733–760 (KNATSPQAPSGQKTAVPTVTSTGGKANS). Over residues 761–771 (TTGGKHTTGHG) the composition is skewed to low complexity. Polar residues predominate over residues 773-806 (RTSTEPTTDYGGDSTTPRTRYNATTYLPPSTSSK). Residues asparagine 794 and asparagine 837 are each glycosylated (N-linked (GlcNAc...) asparagine; by host). The helical transmembrane segment at 840–860 (MLVLQWASLAVLTLLLLLVMA) threads the bilayer. Over 861-886 (DCAFRRNLSTSHTYTTPPYDDAETYV) the chain is Intravirion.

This sequence belongs to the Epstein-Barr GP350 family. As to quaternary structure, interacts with host CR2. In terms of processing, extensively glycosylated.

The protein localises to the virion membrane. It localises to the host membrane. Initiates virion attachment to host B-lymphocyte cell, leading to virus entry. Acts by binding to host CR2 at the surface of B-lymphocytes, facilitating the binding of viral glycoprotein gp42 to HLA class II molecules. Attachment triggers virion-host membrane fusion and invasion of the host cell. The chain is Envelope glycoprotein GP350 from Homo sapiens (Human).